We begin with the raw amino-acid sequence, 55 residues long: Large ribosomal subunit protein bL33 (55 aa).

The protein belongs to the bacterial ribosomal protein bL33 family.

The polypeptide is Large ribosomal subunit protein bL33 (Dehalococcoides mccartyi (strain ATCC BAA-2266 / KCTC 15142 / 195) (Dehalococcoides ethenogenes (strain 195))).